Here is a 65-residue protein sequence, read N- to C-terminus: Large ribosomal subunit protein bL35 (65 aa).

The protein belongs to the bacterial ribosomal protein bL35 family.

This is Large ribosomal subunit protein bL35 from Parabacteroides distasonis (strain ATCC 8503 / DSM 20701 / CIP 104284 / JCM 5825 / NCTC 11152).